A 266-amino-acid chain; its full sequence is Glucosamine-6-phosphate deaminase (266 aa).

Asp-72 acts as the Proton acceptor; for enolization step in catalysis. Residue Asp-141 is the For ring-opening step of the active site. The active-site Proton acceptor; for ring-opening step is His-143. Glu-148 acts as the For ring-opening step in catalysis.

The protein belongs to the glucosamine/galactosamine-6-phosphate isomerase family. NagB subfamily. Homohexamer.

It catalyses the reaction alpha-D-glucosamine 6-phosphate + H2O = beta-D-fructose 6-phosphate + NH4(+). It functions in the pathway amino-sugar metabolism; N-acetylneuraminate degradation; D-fructose 6-phosphate from N-acetylneuraminate: step 5/5. Its activity is regulated as follows. Allosterically activated by N-acetylglucosamine 6-phosphate (GlcNAc6P). In terms of biological role, catalyzes the reversible isomerization-deamination of glucosamine 6-phosphate (GlcN6P) to form fructose 6-phosphate (Fru6P) and ammonium ion. The sequence is that of Glucosamine-6-phosphate deaminase from Aeromonas hydrophila subsp. hydrophila (strain ATCC 7966 / DSM 30187 / BCRC 13018 / CCUG 14551 / JCM 1027 / KCTC 2358 / NCIMB 9240 / NCTC 8049).